The sequence spans 85 residues: Protein C4 (85 aa).

A lipid anchor (N-myristoyl glycine; by host) is attached at glycine 2. The disordered stretch occupies residues 42–65; that stretch reads LNPAPTSTPTSTRTETLSNGENSR. Residues 44 to 59 are compositionally biased toward low complexity; the sequence is PAPTSTPTSTRTETLS.

It belongs to the geminiviridae protein AC4/C4 family.

Its subcellular location is the host cell membrane. In terms of biological role, pathogenicity determinant. May act as a suppressor of RNA-mediated gene silencing, also known as post-transcriptional gene silencing (PTGS), a mechanism of plant viral defense that limits the accumulation of viral RNAs. The chain is Protein C4 from Solanum lycopersicum (Tomato).